A 241-amino-acid polypeptide reads, in one-letter code: Dephospho-CoA kinase CAB5 (241 aa).

The region spanning 3–211 (VVGLTGGIAC…PSKLRTVLEY (209 aa)) is the DPCK domain. 8 to 15 (GGIACGKS) contributes to the ATP binding site.

It belongs to the CoaE family.

It localises to the endoplasmic reticulum. Its subcellular location is the mitochondrion. The protein localises to the nucleus. It carries out the reaction 3'-dephospho-CoA + ATP = ADP + CoA + H(+). It functions in the pathway cofactor biosynthesis; coenzyme A biosynthesis; CoA from (R)-pantothenate: step 5/5. Functionally, catalyzes the phosphorylation of the 3'-hydroxyl group of dephosphocoenzyme A to form coenzyme A. The protein is Dephospho-CoA kinase CAB5 (CAB5) of Saccharomyces cerevisiae (strain ATCC 204508 / S288c) (Baker's yeast).